The sequence spans 250 residues: Probable transcriptional regulatory protein SCO1521 (250 aa).

It belongs to the TACO1 family.

It is found in the cytoplasm. This chain is Probable transcriptional regulatory protein SCO1521, found in Streptomyces coelicolor (strain ATCC BAA-471 / A3(2) / M145).